A 486-amino-acid chain; its full sequence is Glutamate--tRNA ligase (486 aa).

Positions 11-21 match the 'HIGH' region motif; that stretch reads PSPTGLLHIGN. The 'KMSKS' region signature appears at 255-259; sequence KLSKR. Lys258 is a binding site for ATP.

The protein belongs to the class-I aminoacyl-tRNA synthetase family. Glutamate--tRNA ligase type 1 subfamily. Monomer.

The protein resides in the cytoplasm. The catalysed reaction is tRNA(Glu) + L-glutamate + ATP = L-glutamyl-tRNA(Glu) + AMP + diphosphate. Functionally, catalyzes the attachment of glutamate to tRNA(Glu) in a two-step reaction: glutamate is first activated by ATP to form Glu-AMP and then transferred to the acceptor end of tRNA(Glu). The chain is Glutamate--tRNA ligase from Streptococcus pneumoniae (strain ATCC BAA-255 / R6).